The sequence spans 500 residues: ATP synthase subunit alpha (500 aa).

Position 169–176 (169–176 (GDRQTGKT)) interacts with ATP.

This sequence belongs to the ATPase alpha/beta chains family. As to quaternary structure, F-type ATPases have 2 components, CF(1) - the catalytic core - and CF(0) - the membrane proton channel. CF(1) has five subunits: alpha(3), beta(3), gamma(1), delta(1), epsilon(1). CF(0) has three main subunits: a(1), b(2) and c(9-12). The alpha and beta chains form an alternating ring which encloses part of the gamma chain. CF(1) is attached to CF(0) by a central stalk formed by the gamma and epsilon chains, while a peripheral stalk is formed by the delta and b chains.

The protein resides in the cell membrane. The catalysed reaction is ATP + H2O + 4 H(+)(in) = ADP + phosphate + 5 H(+)(out). Functionally, produces ATP from ADP in the presence of a proton gradient across the membrane. The alpha chain is a regulatory subunit. This Lactococcus lactis subsp. cremoris (strain SK11) protein is ATP synthase subunit alpha.